We begin with the raw amino-acid sequence, 233 residues long: Small ribosomal subunit protein uS3 (233 aa).

The KH type-2 domain maps to 39-107 (VRQFLMKKLV…PAQINISEVR (69 aa)).

The protein belongs to the universal ribosomal protein uS3 family. In terms of assembly, part of the 30S ribosomal subunit. Forms a tight complex with proteins S10 and S14.

Binds the lower part of the 30S subunit head. Binds mRNA in the 70S ribosome, positioning it for translation. This chain is Small ribosomal subunit protein uS3, found in Buchnera aphidicola subsp. Schizaphis graminum (strain Sg).